The sequence spans 137 residues: NADPH-dependent 7-cyano-7-deazaguanine reductase (137 aa).

Cysteine 50 functions as the Thioimide intermediate in the catalytic mechanism. The active-site Proton donor is aspartate 57. Substrate contacts are provided by residues 72 to 74 (VEL) and 91 to 92 (HE).

This sequence belongs to the GTP cyclohydrolase I family. QueF type 1 subfamily.

The protein resides in the cytoplasm. It catalyses the reaction 7-aminomethyl-7-carbaguanine + 2 NADP(+) = 7-cyano-7-deazaguanine + 2 NADPH + 3 H(+). It participates in tRNA modification; tRNA-queuosine biosynthesis. Catalyzes the NADPH-dependent reduction of 7-cyano-7-deazaguanine (preQ0) to 7-aminomethyl-7-deazaguanine (preQ1). In Synechococcus sp. (strain CC9902), this protein is NADPH-dependent 7-cyano-7-deazaguanine reductase.